The primary structure comprises 144 residues: MIIQTKYHGEVKIKEEQMINFSNGIPGFLDQKQFVILPLSEESPFLVLQSLKNAELGFIVSSPFLFFNQYEFDLDETVVEILEVEDANDVEVMVILTMESSIEKTTANLRAPIIVNRKNMKAKQVILHDSAYHTKHLLEVASSC.

It belongs to the FliW family. In terms of assembly, interacts with translational regulator CsrA and flagellin(s).

The protein localises to the cytoplasm. In terms of biological role, acts as an anti-CsrA protein, binds CsrA and prevents it from repressing translation of its target genes, one of which is flagellin. Binds to flagellin and participates in the assembly of the flagellum. The sequence is that of Flagellar assembly factor FliW from Bacillus pumilus (strain SAFR-032).